The following is a 137-amino-acid chain: Large ribosomal subunit protein uL16 (137 aa).

Belongs to the universal ribosomal protein uL16 family. Part of the 50S ribosomal subunit.

Its function is as follows. Binds 23S rRNA and is also seen to make contacts with the A and possibly P site tRNAs. In Bradyrhizobium sp. (strain ORS 278), this protein is Large ribosomal subunit protein uL16.